The chain runs to 103 residues: Small ribosomal subunit protein uS10 (103 aa).

This sequence belongs to the universal ribosomal protein uS10 family. As to quaternary structure, part of the 30S ribosomal subunit.

In terms of biological role, involved in the binding of tRNA to the ribosomes. In Pseudoalteromonas translucida (strain TAC 125), this protein is Small ribosomal subunit protein uS10.